The chain runs to 570 residues: Small ribosomal subunit protein uS2c (570 aa).

The segment at 1–306 is N-terminal extension; the sequence is MLNKKPPYLI…IKLNPLSTPQ (306 aa). TRAM domains are found at residues 28–89 and 104–169; these read KLIP…KLIK and ALTP…VATV.

It belongs to the universal ribosomal protein uS2 family.

Its subcellular location is the plastid. It localises to the chloroplast. This Chlamydomonas reinhardtii (Chlamydomonas smithii) protein is Small ribosomal subunit protein uS2c (rps2-1).